Consider the following 168-residue polypeptide: MRTQSLYNTHFSHTSFAVSNAAESTNDGKENGLISELVYNEHQPAVVQLLLPLLQQLGMQSRWLLWLTPQQKLSKLWLQQSGLPVGKVVQLSQINSLDTVEAMEKALLTGNYSVVLGWLPDLTEEDRLKLRRAAELGNAYGFIMRPQRDINPVHGHCSTLKIHSSLYH.

A ftsZ binding region spans residues 106–112 (ALLTGNY). The interval 161–168 (KIHSSLYH) is lon protease binding.

It belongs to the SulA family. In terms of assembly, interacts with FtsZ. Post-translationally, is rapidly cleaved and degraded by the Lon protease once DNA damage is repaired.

Functionally, component of the SOS system and an inhibitor of cell division. Accumulation of SulA causes rapid cessation of cell division and the appearance of long, non-septate filaments. In the presence of GTP, binds a polymerization-competent form of FtsZ in a 1:1 ratio, thus inhibiting FtsZ polymerization and therefore preventing it from participating in the assembly of the Z ring. This mechanism prevents the premature segregation of damaged DNA to daughter cells during cell division. The sequence is that of Cell division inhibitor SulA from Serratia proteamaculans (strain 568).